The chain runs to 178 residues: Large ribosomal subunit protein uL6 (178 aa).

Belongs to the universal ribosomal protein uL6 family. In terms of assembly, part of the 50S ribosomal subunit.

Functionally, this protein binds to the 23S rRNA, and is important in its secondary structure. It is located near the subunit interface in the base of the L7/L12 stalk, and near the tRNA binding site of the peptidyltransferase center. The sequence is that of Large ribosomal subunit protein uL6 from Maridesulfovibrio salexigens (strain ATCC 14822 / DSM 2638 / NCIMB 8403 / VKM B-1763) (Desulfovibrio salexigens).